The primary structure comprises 813 residues: Leucine--tRNA ligase (813 aa).

The 'HIGH' region signature appears at 42–52; it reads PYTSGNLHIGH. The 'KMSKS' region motif lies at 580–584; the sequence is KMSKS. An ATP-binding site is contributed by lysine 583.

Belongs to the class-I aminoacyl-tRNA synthetase family.

It localises to the cytoplasm. It catalyses the reaction tRNA(Leu) + L-leucine + ATP = L-leucyl-tRNA(Leu) + AMP + diphosphate. In Dehalococcoides mccartyi (strain ATCC BAA-2266 / KCTC 15142 / 195) (Dehalococcoides ethenogenes (strain 195)), this protein is Leucine--tRNA ligase.